Reading from the N-terminus, the 372-residue chain is tRNA 2-selenouridine synthase (372 aa).

Residues 19-142 (LASGHPIMDV…MRQYLIDTID (124 aa)) form the Rhodanese domain. Cys102 (S-selanylcysteine intermediate) is an active-site residue.

It belongs to the SelU family. In terms of assembly, monomer.

It carries out the reaction 5-methylaminomethyl-2-thiouridine(34) in tRNA + selenophosphate + (2E)-geranyl diphosphate + H2O + H(+) = 5-methylaminomethyl-2-selenouridine(34) in tRNA + (2E)-thiogeraniol + phosphate + diphosphate. The catalysed reaction is 5-methylaminomethyl-2-thiouridine(34) in tRNA + (2E)-geranyl diphosphate = 5-methylaminomethyl-S-(2E)-geranyl-thiouridine(34) in tRNA + diphosphate. It catalyses the reaction 5-methylaminomethyl-S-(2E)-geranyl-thiouridine(34) in tRNA + selenophosphate + H(+) = 5-methylaminomethyl-2-(Se-phospho)selenouridine(34) in tRNA + (2E)-thiogeraniol. The enzyme catalyses 5-methylaminomethyl-2-(Se-phospho)selenouridine(34) in tRNA + H2O = 5-methylaminomethyl-2-selenouridine(34) in tRNA + phosphate. Functionally, involved in the post-transcriptional modification of the uridine at the wobble position (U34) of tRNA(Lys), tRNA(Glu) and tRNA(Gln). Catalyzes the conversion of 2-thiouridine (S2U-RNA) to 2-selenouridine (Se2U-RNA). Acts in a two-step process involving geranylation of 2-thiouridine (S2U) to S-geranyl-2-thiouridine (geS2U) and subsequent selenation of the latter derivative to 2-selenouridine (Se2U) in the tRNA chain. The chain is tRNA 2-selenouridine synthase from Shewanella loihica (strain ATCC BAA-1088 / PV-4).